The primary structure comprises 266 residues: Undecaprenyl-diphosphatase (266 aa).

A run of 8 helical transmembrane segments spans residues 4–24, 39–59, 88–108, 114–134, 147–167, 186–206, 214–234, and 246–266; these read ILRV…PISS, LPIV…IIYY, LNLI…GIFI, LFTF…LFLI, IFFS…PGIS, SLEI…FLKY, IIFN…FGLF, and SKLY…YFLV.

Belongs to the UppP family.

The protein localises to the cell inner membrane. It catalyses the reaction di-trans,octa-cis-undecaprenyl diphosphate + H2O = di-trans,octa-cis-undecaprenyl phosphate + phosphate + H(+). Functionally, catalyzes the dephosphorylation of undecaprenyl diphosphate (UPP). Confers resistance to bacitracin. In Borrelia recurrentis (strain A1), this protein is Undecaprenyl-diphosphatase.